The chain runs to 75 residues: Putative antitoxin PH1062.1 (75 aa).

This sequence belongs to the UPF0330 family.

In terms of biological role, possibly the antitoxin component of a type II toxin-antitoxin (TA) system. The polypeptide is Putative antitoxin PH1062.1 (Pyrococcus horikoshii (strain ATCC 700860 / DSM 12428 / JCM 9974 / NBRC 100139 / OT-3)).